An 82-amino-acid polypeptide reads, in one-letter code: Large ribosomal subunit protein bL27 (82 aa).

The disordered stretch occupies residues 1-26 (MAHKKGQGASRNGRDSESKRLGMKVG).

Belongs to the bacterial ribosomal protein bL27 family.

The sequence is that of Large ribosomal subunit protein bL27 from Chlamydia felis (strain Fe/C-56) (Chlamydophila felis).